The sequence spans 63 residues: Protein DsrB (63 aa).

It belongs to the DsrB family.

In Yersinia enterocolitica serotype O:8 / biotype 1B (strain NCTC 13174 / 8081), this protein is Protein DsrB.